A 60-amino-acid chain; its full sequence is MANQTVKVTQVKSSIGRLPKHKATLRGLGLRRINHTVELEDTACVRGMINQVSYMVKVEG.

Belongs to the universal ribosomal protein uL30 family. As to quaternary structure, part of the 50S ribosomal subunit.

The chain is Large ribosomal subunit protein uL30 from Pseudoalteromonas translucida (strain TAC 125).